We begin with the raw amino-acid sequence, 672 residues long: Protein seu-1 (672 aa).

2 disordered regions span residues 1–463 and 576–672; these read MSSI…AGTE and LAPP…LKHL. Residues 8 to 20 show a composition bias toward basic and acidic residues; it reads NDNRRPTFRDHRT. Positions 25-34 are enriched in gly residues; the sequence is GRGGSGGGGR. Basic and acidic residues predominate over residues 62-85; the sequence is RSQDHRQRSPEVRRHRSPEKESKD. A compositionally biased stretch (low complexity) spans 87-105; that stretch reads VVTSTGSSRGATSASVTSS. Basic and acidic residues-rich tracts occupy residues 107 to 138, 189 to 226, 234 to 268, and 289 to 306; these read RRHE…DADR, VSRH…KSNG, RRRE…KVED, and EQAK…ESHQ. Positions 307–317 are enriched in low complexity; that stretch reads SAHSAAVSNAS. Acidic residues predominate over residues 322 to 343; sequence SEEELDYEEDDIDVDLDGDIDV. Basic and acidic residues-rich tracts occupy residues 366-375, 382-396, 410-424, 436-447, 607-626, and 636-659; these read NDVKDETMEE, PEKK…DDKD, RRED…SDHH, RATDHKESRRSE, SFGD…RHMD, and DHRV…ERGF.

Highly expressed in intestinal cells, lateral hypodermal (seam) cells, Pn.p ventral hypodermal cells, and spermatheca. Expressed at low levels in the ventral nerve cord.

It localises to the nucleus. Its function is as follows. Together with unc-5, involved in touch neuron axon guidance. During gonad morphogenesis, plays a role in the unc-5-/unc-6-mediated migration of distal tip cells along the body. The protein is Protein seu-1 of Caenorhabditis elegans.